Here is a 437-residue protein sequence, read N- to C-terminus: Proline--tRNA ligase (437 aa).

This sequence belongs to the class-II aminoacyl-tRNA synthetase family. ProS type 2 subfamily. Homodimer.

The protein resides in the cytoplasm. The enzyme catalyses tRNA(Pro) + L-proline + ATP = L-prolyl-tRNA(Pro) + AMP + diphosphate. In terms of biological role, catalyzes the attachment of proline to tRNA(Pro) in a two-step reaction: proline is first activated by ATP to form Pro-AMP and then transferred to the acceptor end of tRNA(Pro). The polypeptide is Proline--tRNA ligase (Acidiphilium cryptum (strain JF-5)).